We begin with the raw amino-acid sequence, 266 residues long: Putative carbamate hydrolase RutD (266 aa).

This sequence belongs to the AB hydrolase superfamily. Hydrolase RutD family.

The catalysed reaction is carbamate + 2 H(+) = NH4(+) + CO2. Functionally, involved in pyrimidine catabolism. May facilitate the hydrolysis of carbamate, a reaction that can also occur spontaneously. The protein is Putative carbamate hydrolase RutD of Escherichia coli O7:K1 (strain IAI39 / ExPEC).